The sequence spans 360 residues: Phenylalanine--tRNA ligase alpha subunit (360 aa).

A Mg(2+)-binding site is contributed by glutamate 255.

Belongs to the class-II aminoacyl-tRNA synthetase family. Phe-tRNA synthetase alpha subunit type 1 subfamily. In terms of assembly, tetramer of two alpha and two beta subunits. The cofactor is Mg(2+).

Its subcellular location is the cytoplasm. The catalysed reaction is tRNA(Phe) + L-phenylalanine + ATP = L-phenylalanyl-tRNA(Phe) + AMP + diphosphate + H(+). The chain is Phenylalanine--tRNA ligase alpha subunit from Rhizorhabdus wittichii (strain DSM 6014 / CCUG 31198 / JCM 15750 / NBRC 105917 / EY 4224 / RW1) (Sphingomonas wittichii).